The following is a 518-amino-acid chain: Glutamate--cysteine ligase (518 aa).

The protein belongs to the glutamate--cysteine ligase type 1 family. Type 1 subfamily.

It catalyses the reaction L-cysteine + L-glutamate + ATP = gamma-L-glutamyl-L-cysteine + ADP + phosphate + H(+). It functions in the pathway sulfur metabolism; glutathione biosynthesis; glutathione from L-cysteine and L-glutamate: step 1/2. The polypeptide is Glutamate--cysteine ligase (Escherichia coli O7:K1 (strain IAI39 / ExPEC)).